A 244-amino-acid chain; its full sequence is CTD nuclear envelope phosphatase 1 (244 aa).

Residues 7–29 (LLGLRTFVAFAAKLWSFFIYLLR) form a helical membrane-spanning segment. The region spanning 57–224 (AQVKRKILVL…LNLLPMLDAL (168 aa)) is the FCP1 homology domain.

It belongs to the dullard family. As to quaternary structure, interacts with CNEP1R1; the complex dephosphorylates LPIN1 and LPIN2. Muscle specific with lower expression in other metabolic tissues.

The protein resides in the endoplasmic reticulum membrane. It is found in the nucleus membrane. The catalysed reaction is O-phospho-L-seryl-[protein] + H2O = L-seryl-[protein] + phosphate. It catalyses the reaction O-phospho-L-threonyl-[protein] + H2O = L-threonyl-[protein] + phosphate. In terms of biological role, serine/threonine protein phosphatase forming with CNEP1R1 an active phosphatase complex that dephosphorylates and may activate LPIN1 and LPIN2. LPIN1 and LPIN2 are phosphatidate phosphatases that catalyze the conversion of phosphatidic acid to diacylglycerol and control the metabolism of fatty acids at different levels. May indirectly modulate the lipid composition of nuclear and/or endoplasmic reticulum membranes and be required for proper nuclear membrane morphology and/or dynamics. May also indirectly regulate the production of lipid droplets and triacylglycerol. May antagonize BMP signaling. The sequence is that of CTD nuclear envelope phosphatase 1 (Ctdnep1) from Mus musculus (Mouse).